A 633-amino-acid chain; its full sequence is Alpha-amylase (633 aa).

The Nucleophile role is filled by Glu123. The active-site Proton donor is the Asp214.

This sequence belongs to the glycosyl hydrolase 57 family.

The enzyme catalyses Endohydrolysis of (1-&gt;4)-alpha-D-glucosidic linkages in polysaccharides containing three or more (1-&gt;4)-alpha-linked D-glucose units.. This chain is Alpha-amylase (amyA), found in Pyrococcus horikoshii (strain ATCC 700860 / DSM 12428 / JCM 9974 / NBRC 100139 / OT-3).